Reading from the N-terminus, the 740-residue chain is Cell death abnormality protein 12 (740 aa).

Residues 348–494 (SEIQKVLDID…FVLEQLRHVL (147 aa)) form the ELMO domain. The segment at 555–690 (INHLNYLKKG…ESLAYLVGNT (136 aa)) is required for punctate localization, cell corpse engulfment and distal cell tip migration. The SH3-binding signature appears at 724–727 (PDVP).

Interacts with psr-1. Forms a ternary complex with ced-2 and ced-5.

The protein resides in the cytoplasm. Functionally, involved in apoptosis and necrosis. Required for the cell corpse engulfment process. Has roles in the formation of actin halos and distal tip cell migration. Plays no role in amphid axon outgrowth. The sequence is that of Cell death abnormality protein 12 from Caenorhabditis briggsae.